The sequence spans 317 residues: Olfactory receptor 5K16 (317 aa).

Over 1–28 (MEKTNHSLTTQFILVGFSDHPDLKTPLF) the chain is Extracellular. Residue Asn5 is glycosylated (N-linked (GlcNAc...) asparagine). The chain crosses the membrane as a helical span at residues 29–49 (LLFSVIYLVTMVGNLGLVAVI). The Cytoplasmic portion of the chain corresponds to 50–56 (YLEPRLH). A helical transmembrane segment spans residues 57–77 (TPMYIFLGNLALMDSCCSCAI). The Extracellular portion of the chain corresponds to 78–93 (TPKILENFFSVDRRIS). A helical transmembrane segment spans residues 94–114 (LYECMAQFYFLCLAETADCFL). Cys97 and Cys189 are joined by a disulfide. The Cytoplasmic segment spans residues 115–144 (LAAMAYDRYVAICNPLQYHSMMSKKLSIQM). The chain crosses the membrane as a helical span at residues 145–165 (SIGTFITSNLHSLIHVGCLLR). At 166–198 (LTFCKSNRIDHFFCDILPLYRLSCTDPFINELM) the chain is on the extracellular side. A helical transmembrane segment spans residues 199 to 219 (IYIFSMPIQVFTITTVLVSYF). Over 220–239 (CILLTIFKMKSKDGRGKAFS) the chain is Cytoplasmic. A helical membrane pass occupies residues 240 to 259 (TCASHFFSVSIFYVCLLMYI). Residues 260–268 (RPFDEGNKD) are Extracellular-facing. Residues 269 to 289 (IPVAVFYTIIIPLLNPFIYSL) form a helical membrane-spanning segment. The Cytoplasmic segment spans residues 290 to 317 (RNKEVVNAVKKVMKTHSIFKNASASMAR).

This sequence belongs to the G-protein coupled receptor 1 family.

It localises to the cell membrane. Potential odorant receptor. The protein is Olfactory receptor 5K16 of Mus musculus (Mouse).